A 504-amino-acid polypeptide reads, in one-letter code: MSVVRWPRVLTPSLLSQILKKQKNPVTALKLFEEAKERFPSYGHNGSVYATMIDILGKSNRVLEMKYVIERMKEDSCECKDSVFASVIRTFSRAGRLEDAISLFKSLHEFNCVNWSLSFDTLLQEMVKESELEAACHIFRKYCYGWEVNSRITALNLLMKVLCQVNRSDLASQVFQEMNYQGCYPDRDSYRILMKGFCLEGKLEEATHLLYSMFWRISQKGSGEDIVVYRILLDALCDAGEVDDAIEILGKILRKGLKAPKRCYHHIEAGHWESSSEGIERVKRLLTETLIRGAIPCLDSYSAMATDLFEEGKLVEGEEVLLAMRSKGFEPTPFIYGAKVKALCRAGKLKEAVSVINKEMMQGHCLPTVGVYNVLIKGLCDDGKSMEAVGYLKKMSKQVSCVANEETYQTLVDGLCRDGQFLEASQVMEEMLIKSHFPGVETYHMMIKGLCDMDRRYEAVMWLEEMVSQDMVPESSVWKALAESVCFCAIDVVEILEHLISSKR.

PPR repeat units lie at residues 45–79 (NGSV…SCEC), 80–114 (KDSV…NCVN), 115–145 (WSLS…YCYG), 151–185 (RITA…GCYP), 186–216 (DRDS…MFWR), 225–259 (DIVV…GLKA), 260–296 (PKRC…GAIP), 297–331 (CLDS…GFEP), 332–367 (TPFI…HCLP), 368–398 (TVGV…MSKQ), 404–438 (NEET…SHFP), and 439–473 (GVET…DMVP).

It belongs to the PPR family. P subfamily.

This Arabidopsis thaliana (Mouse-ear cress) protein is Pentatricopeptide repeat-containing protein At1g05600.